The chain runs to 500 residues: MGLLPVVGITSPALITHKNHANPKIQRHNQSTSETTVSWTSRINLLTRNGRLAEAAKEFSDMTLAGVEPNHITFIALLSGCGDFTSGSEALGDLLHGYACKLGLDRNHVMVGTAIIGMYSKRGRFKKARLVFDYMEDKNSVTWNTMIDGYMRSGQVDNAAKMFDKMPERDLISWTAMINGFVKKGYQEEALLWFREMQISGVKPDYVAIIAALNACTNLGALSFGLWVHRYVLSQDFKNNVRVSNSLIDLYCRCGCVEFARQVFYNMEKRTVVSWNSVIVGFAANGNAHESLVYFRKMQEKGFKPDAVTFTGALTACSHVGLVEEGLRYFQIMKCDYRISPRIEHYGCLVDLYSRAGRLEDALKLVQSMPMKPNEVVIGSLLAACSNHGNNIVLAERLMKHLTDLNVKSHSNYVILSNMYAADGKWEGASKMRRKMKGLGLKKQPGFSSIEIDDCMHVFMAGDNAHVETTYIREVLELISSDLRLQGCVVETLAGDLLNA.

A chloroplast-targeting transit peptide spans 1-54 (MGLLPVVGITSPALITHKNHANPKIQRHNQSTSETTVSWTSRINLLTRNGRLAE). PPR repeat units follow at residues 35-69 (TTVSWTSRINLLTRNGRLAEAAKEFSDMTLAGVEP), 70-106 (NHITFIALLSGCGDFTSGSEALGDLLHGYACKLGLDR), 108-138 (HVMVGTAIIGMYSKRGRFKKARLVFDYMEDK), 139-173 (NSVTWNTMIDGYMRSGQVDNAAKMFDKMPERDLIS), 174-204 (WTAMINGFVKKGYQEEALLWFREMQISGVKP), 205-239 (DYVAIIAALNACTNLGALSFGLWVHRYVLSQDFKN), 240-270 (NVRVSNSLIDLYCRCGCVEFARQVFYNMEKR), 271-305 (TVVSWNSVIVGFAANGNAHESLVYFRKMQEKGFKP), 306-336 (DAVTFTGALTACSHVGLVEEGLRYFQIMKCD), and 342-376 (RIEHYGCLVDLYSRAGRLEDALKLVQSMPMKPNEV). The interval 377–453 (VIGSLLAACS…QPGFSSIEID (77 aa)) is type E motif. The segment at 454–484 (DCMHVFMAGDNAHVETTYIREVLELISSDLR) is type E(+) motif.

This sequence belongs to the PPR family. PCMP-E subfamily.

The protein localises to the plastid. Its subcellular location is the chloroplast. The polypeptide is Pentatricopeptide repeat-containing protein At1g05750, chloroplastic (PDE247) (Arabidopsis thaliana (Mouse-ear cress)).